The sequence spans 126 residues: Holo-[acyl-carrier-protein] synthase (126 aa).

Mg(2+) contacts are provided by Asp-9 and Glu-57.

This sequence belongs to the P-Pant transferase superfamily. AcpS family. Requires Mg(2+) as cofactor.

It is found in the cytoplasm. The enzyme catalyses apo-[ACP] + CoA = holo-[ACP] + adenosine 3',5'-bisphosphate + H(+). In terms of biological role, transfers the 4'-phosphopantetheine moiety from coenzyme A to a Ser of acyl-carrier-protein. This chain is Holo-[acyl-carrier-protein] synthase, found in Pseudoalteromonas atlantica (strain T6c / ATCC BAA-1087).